A 201-amino-acid chain; its full sequence is ATP-dependent Clp protease proteolytic subunit (201 aa).

Residue Ser-98 is the Nucleophile of the active site. His-123 is a catalytic residue.

It belongs to the peptidase S14 family. Fourteen ClpP subunits assemble into 2 heptameric rings which stack back to back to give a disk-like structure with a central cavity, resembling the structure of eukaryotic proteasomes.

Its subcellular location is the cytoplasm. The catalysed reaction is Hydrolysis of proteins to small peptides in the presence of ATP and magnesium. alpha-casein is the usual test substrate. In the absence of ATP, only oligopeptides shorter than five residues are hydrolyzed (such as succinyl-Leu-Tyr-|-NHMec, and Leu-Tyr-Leu-|-Tyr-Trp, in which cleavage of the -Tyr-|-Leu- and -Tyr-|-Trp bonds also occurs).. Its function is as follows. Cleaves peptides in various proteins in a process that requires ATP hydrolysis. Has a chymotrypsin-like activity. Plays a major role in the degradation of misfolded proteins. This chain is ATP-dependent Clp protease proteolytic subunit, found in Rickettsia akari (strain Hartford).